Reading from the N-terminus, the 124-residue chain is Small ribosomal subunit protein uS12 (124 aa).

Position 89 is a 3-methylthioaspartic acid (Asp-89). The disordered stretch occupies residues 105–124 (QGVKNRKQARSRYGAKKEKS). Positions 108–118 (KNRKQARSRYG) are enriched in basic residues.

The protein belongs to the universal ribosomal protein uS12 family. As to quaternary structure, part of the 30S ribosomal subunit. Contacts proteins S8 and S17. May interact with IF1 in the 30S initiation complex.

Functionally, with S4 and S5 plays an important role in translational accuracy. In terms of biological role, interacts with and stabilizes bases of the 16S rRNA that are involved in tRNA selection in the A site and with the mRNA backbone. Located at the interface of the 30S and 50S subunits, it traverses the body of the 30S subunit contacting proteins on the other side and probably holding the rRNA structure together. The combined cluster of proteins S8, S12 and S17 appears to hold together the shoulder and platform of the 30S subunit. The protein is Small ribosomal subunit protein uS12 of Mycobacteroides abscessus (strain ATCC 19977 / DSM 44196 / CCUG 20993 / CIP 104536 / JCM 13569 / NCTC 13031 / TMC 1543 / L948) (Mycobacterium abscessus).